The chain runs to 491 residues: 2,3-bisphosphoglycerate-independent phosphoglycerate mutase (491 aa).

Residues D11 and S61 each coordinate Mn(2+). S61 functions as the Phosphoserine intermediate in the catalytic mechanism. Substrate is bound by residues H118, 147–148 (RD), R177, R183, 248–251 (RSDR), and K320. 5 residues coordinate Mn(2+): D386, H390, D427, H428, and H445.

The protein belongs to the BPG-independent phosphoglycerate mutase family. As to quaternary structure, monomer. Mn(2+) serves as cofactor.

The catalysed reaction is (2R)-2-phosphoglycerate = (2R)-3-phosphoglycerate. The protein operates within carbohydrate degradation; glycolysis; pyruvate from D-glyceraldehyde 3-phosphate: step 3/5. Catalyzes the interconversion of 2-phosphoglycerate and 3-phosphoglycerate. The chain is 2,3-bisphosphoglycerate-independent phosphoglycerate mutase from Sulfurimonas denitrificans (strain ATCC 33889 / DSM 1251) (Thiomicrospira denitrificans (strain ATCC 33889 / DSM 1251)).